The primary structure comprises 124 residues: Fluoride-specific ion channel FluC (124 aa).

4 helical membrane passes run 4–24, 35–55, 60–80, and 102–122; these read LLLV…ISIF, FGTL…YALG, ISPE…TTFS, and VVLN…LVFS. Gly-74 and Thr-77 together coordinate Na(+).

Belongs to the fluoride channel Fluc/FEX (TC 1.A.43) family.

It localises to the cell inner membrane. The catalysed reaction is fluoride(in) = fluoride(out). Na(+) is not transported, but it plays an essential structural role and its presence is essential for fluoride channel function. In terms of biological role, fluoride-specific ion channel. Important for reducing fluoride concentration in the cell, thus reducing its toxicity. The protein is Fluoride-specific ion channel FluC of Shewanella baltica (strain OS223).